A 202-amino-acid polypeptide reads, in one-letter code: Small ribosomal subunit protein uS4c (202 aa).

Positions Met-90–Gly-148 constitute an S4 RNA-binding domain.

It belongs to the universal ribosomal protein uS4 family. Part of the 30S ribosomal subunit. Contacts protein S5. The interaction surface between S4 and S5 is involved in control of translational fidelity.

Its subcellular location is the plastid. It localises to the chloroplast. Its function is as follows. One of the primary rRNA binding proteins, it binds directly to 16S rRNA where it nucleates assembly of the body of the 30S subunit. With S5 and S12 plays an important role in translational accuracy. The polypeptide is Small ribosomal subunit protein uS4c (rps4) (Haplomitrium hookeri (Hooker's flapwort)).